The following is a 279-amino-acid chain: DegV domain-containing protein SP_1112 (279 aa).

The DegV domain maps to 4 to 277 (IKIVTDSSVT…ENAWAILIRY (274 aa)). Hexadecanoate is bound by residues threonine 62 and serine 94.

May bind long-chain fatty acids, such as palmitate, and may play a role in lipid transport or fatty acid metabolism. This is DegV domain-containing protein SP_1112 from Streptococcus pneumoniae serotype 4 (strain ATCC BAA-334 / TIGR4).